The primary structure comprises 55 residues: Spermatid nuclear transition protein 1 (55 aa).

A compositionally biased stretch (basic residues) spans 1–42 (MSTSRKLKSHGMRRGKNRAPHKGVKRGGSKRKYRKGSLKSRK). Positions 1–55 (MSTSRKLKSHGMRRGKNRAPHKGVKRGGSKRKYRKGSLKSRKRCDDANRNYRSHL) are disordered. 3 positions are modified to phosphoserine: S9, S37, and S40.

This sequence belongs to the nuclear transition protein 1 family. In terms of tissue distribution, testis.

Its subcellular location is the nucleus. The protein resides in the chromosome. In terms of biological role, plays a key role in the replacement of histones to protamine in the elongating spermatids of mammals. In condensing spermatids, loaded onto the nucleosomes, where it promotes the recruitment and processing of protamines, which are responsible for histone eviction. This is Spermatid nuclear transition protein 1 (TNP1) from Sus scrofa (Pig).